The following is a 1130-amino-acid chain: DNA-directed RNA polymerase I subunit rpa2 (1130 aa).

Residues 1070-1096 form a C4-type zinc finger; it reads CKLCGSTLTIYSKKDYSNQTVSECKSC.

This sequence belongs to the RNA polymerase beta chain family. Component of the RNA polymerase I (Pol I) complex consisting of 14 subunits.

Its subcellular location is the nucleus. It localises to the nucleolus. It carries out the reaction RNA(n) + a ribonucleoside 5'-triphosphate = RNA(n+1) + diphosphate. In terms of biological role, DNA-dependent RNA polymerase catalyzes the transcription of DNA into RNA using the four ribonucleoside triphosphates as substrates. Second largest core component of RNA polymerase I which synthesizes ribosomal RNA precursors. Proposed to contribute to the polymerase catalytic activity and forms the polymerase active center together with the largest subunit. Pol I is composed of mobile elements and RPA2 is part of the core element with the central large cleft and probably a clamp element that moves to open and close the cleft. In Dictyostelium discoideum (Social amoeba), this protein is DNA-directed RNA polymerase I subunit rpa2 (polr1b).